The chain runs to 262 residues: Lectin (262 aa).

Residues 1–21 (MASSVLLVLSLFLVLLLTQAS) form the signal peptide. 5 N-linked (GlcNAc...) asparagine glycosylation sites follow: asparagine 53, asparagine 82, asparagine 100, asparagine 129, and asparagine 205.

The protein belongs to the leguminous lectin family.

Its function is as follows. This metalloglycoprotein, containing Ca(2+), Mn(2+), binds glycoconjugates containing terminal non-reducing alpha-D-GalNAc residues. This is Lectin from Phaseolus lunatus (Lima bean).